The primary structure comprises 212 residues: Thymidylate kinase (212 aa).

Position 15 to 22 (15 to 22) interacts with ATP; that stretch reads GIDGAGKS.

The protein belongs to the thymidylate kinase family.

It catalyses the reaction dTMP + ATP = dTDP + ADP. Its function is as follows. Phosphorylation of dTMP to form dTDP in both de novo and salvage pathways of dTTP synthesis. The chain is Thymidylate kinase from Chromobacterium violaceum (strain ATCC 12472 / DSM 30191 / JCM 1249 / CCUG 213 / NBRC 12614 / NCIMB 9131 / NCTC 9757 / MK).